The sequence spans 156 residues: Small ribosomal subunit protein uS7 (156 aa).

The protein belongs to the universal ribosomal protein uS7 family. As to quaternary structure, part of the 30S ribosomal subunit. Contacts proteins S9 and S11.

Its function is as follows. One of the primary rRNA binding proteins, it binds directly to 16S rRNA where it nucleates assembly of the head domain of the 30S subunit. Is located at the subunit interface close to the decoding center, probably blocks exit of the E-site tRNA. The chain is Small ribosomal subunit protein uS7 from Chromohalobacter salexigens (strain ATCC BAA-138 / DSM 3043 / CIP 106854 / NCIMB 13768 / 1H11).